A 405-amino-acid polypeptide reads, in one-letter code: FITKAIPIVLAALSAVNGAKILEAGPHAETIPNKYIVVMKKDVSDEAFSTHTTWLSQNLNRRLMRRSGSSKAMAGMQNKYSLGGIFRAYSGEFDDAMIKDISNHDDVDYIEPDFVVRTSTNGTNLTRQENVPSWGLARVGSKQAGGTTYYYDSSAGKGVTAYVIDTGIDIEHEDFGGRAKWGKNFVDQRDEDCNGHGTHVAGTVGGTKYGLAKSVSLVAVKVLDCDGSGSNSGVIRGMEWAMREASGGGNGTAKAAGKSVMNMSLGGPRSQASNDAARAISEAGIFMAVAAGNENMDAQHSSPASEPSVCTVAASTEDDGKAEFSNYGAVVDVYAPGKDITSLKPGGSTDTLSGTSMASPHVCGLGAYLIGLGKQGGPGLCDTIKQMANEAIQRPGEGTTGKLIY.

Residues 1–18 form the signal peptide; the sequence is FITKAIPIVLAALSAVNG. Positions 19-125 are excised as a propeptide; it reads AKILEAGPHA…VRTSTNGTNL (107 aa). Residues 34–118 enclose the Inhibitor I9 domain; it reads KYIVVMKKDV…YIEPDFVVRT (85 aa). N121 and N124 each carry an N-linked (GlcNAc...) asparagine glycan. The Peptidase S8 domain maps to 133–405; sequence SWGLARVGSK…GEGTTGKLIY (273 aa). Active-site charge relay system residues include D165 and H196. 2 N-linked (GlcNAc...) asparagine glycosylation sites follow: N250 and N262. Residue S356 is the Charge relay system of the active site.

Belongs to the peptidase S8 family.

Its subcellular location is the secreted. Functionally, secreted subtilisin-like serine protease with keratinolytic activity that contributes to pathogenicity. The protein is Subtilisin-like protease 6 (SUB6) of Trichophyton schoenleinii.